We begin with the raw amino-acid sequence, 150 residues long: Ribosomal RNA large subunit methyltransferase H (150 aa).

Residues A100 and 118–123 (LSEMTF) each bind S-adenosyl-L-methionine.

The protein belongs to the RNA methyltransferase RlmH family. Homodimer.

The protein localises to the cytoplasm. It carries out the reaction pseudouridine(1915) in 23S rRNA + S-adenosyl-L-methionine = N(3)-methylpseudouridine(1915) in 23S rRNA + S-adenosyl-L-homocysteine + H(+). Its function is as follows. Specifically methylates the pseudouridine at position 1915 (m3Psi1915) in 23S rRNA. This is Ribosomal RNA large subunit methyltransferase H from Helicobacter pylori (strain Shi470).